The following is a 666-amino-acid chain: Protein OS-9 (666 aa).

Positions 1-30 are cleaved as a signal peptide; that stretch reads MAAEALLSSLLGLLFLGLLLPAHLTGGVGS. Residues 108 to 230 form the MRH domain; the sequence is APCLLKTKDW…SIRTSRLCPH (123 aa). An intrachain disulfide couples C110 to C123. A mannooligosaccharide derivative is bound by residues W117, W118, and Q130. A glycan (N-linked (GlcNAc...) asparagine) is linked at N177. Intrachain disulfides connect C181-C216 and C196-C228. D182, R188, E212, and Y218 together coordinate a mannooligosaccharide derivative. Disordered stretches follow at residues 261-356, 370-449, 505-540, and 631-666; these read RQAE…NVQV, EELK…SDRE, ESQSPELVQKYKKRRVVPQKPPPSPHPTEEEPEHRV, and EANKERQRQSELESNYRRVWGSPGGEDTGDLDEFDF. Composition is skewed to basic and acidic residues over residues 263 to 281 and 294 to 310; these read AESKQHEEKVTEEVQDTDH and PKKEDVSPTKEDKESEF. The segment covering 320 to 332 has biased composition (low complexity); it reads QATGTEEAQAGEQ. Basic and acidic residues-rich tracts occupy residues 370 to 379 and 395 to 412; these read EELKGAEKGK and PQREAEAKGKGGEPRGLV. Over residues 413–429 the composition is skewed to acidic residues; sequence EEEDGDEEEEDEDEDEQ. Positions 434-449 are enriched in basic and acidic residues; the sequence is EFEKELEGMLLPSDRE. Positions 631-646 are enriched in basic and acidic residues; that stretch reads EANKERQRQSELESNY. Residues 657–666 are compositionally biased toward acidic residues; sequence DTGDLDEFDF.

Belongs to the OS-9 family. Component of the HRD1 complex, which comprises at least SYNV1/HRD1, DERL1/2, FAM8A1, HERPUD1/HERP, OS9, SEL1L and UBE2J1. FAM8A1 is stabilized by interaction with SYNV1, which prevents its proteasomal degradation. OS9 and UBE2J1 recruitment to the complex may be mediated by SEL1L. Through this complex, may interact with ERLEC1 and HSPA5. Interacts (via C-terminus) with CPNE6 (via second C2 domain); this interaction occurs in a calcium-dependent manner in vitro. Interacts with CREB3. In terms of processing, intramolecular disulfide bonds.

Its subcellular location is the endoplasmic reticulum lumen. Its function is as follows. Lectin component of the HRD1 complex, which functions in endoplasmic reticulum (ER) quality control and ER-associated degradation (ERAD). Specifically recognizes and binds improperly folded glycoproteins as well as hyperglycosylated proteins, retain them in the ER, and transfers them to the ubiquitination machinery and promote their degradation. Possible targets include TRPV4 as well as hyperglycosylated HSP90B1. In Rattus norvegicus (Rat), this protein is Protein OS-9 (Os9).